Reading from the N-terminus, the 135-residue chain is Transcription antitermination protein NusB (135 aa).

It belongs to the NusB family.

Functionally, involved in transcription antitermination. Required for transcription of ribosomal RNA (rRNA) genes. Binds specifically to the boxA antiterminator sequence of the ribosomal RNA (rrn) operons. The polypeptide is Transcription antitermination protein NusB (Shewanella halifaxensis (strain HAW-EB4)).